The sequence spans 56 residues: Large ribosomal subunit protein bL33 (56 aa).

This sequence belongs to the bacterial ribosomal protein bL33 family.

This Actinobacillus pleuropneumoniae serotype 5b (strain L20) protein is Large ribosomal subunit protein bL33.